The following is a 66-amino-acid chain: Large ribosomal subunit protein bL31 (66 aa).

Zn(2+)-binding residues include Cys16, Cys18, Cys36, and Cys39.

This sequence belongs to the bacterial ribosomal protein bL31 family. Type A subfamily. In terms of assembly, part of the 50S ribosomal subunit. It depends on Zn(2+) as a cofactor.

In terms of biological role, binds the 23S rRNA. In Anoxybacillus flavithermus (strain DSM 21510 / WK1), this protein is Large ribosomal subunit protein bL31.